The sequence spans 145 residues: Large ribosomal subunit protein uL13 (145 aa).

The protein belongs to the universal ribosomal protein uL13 family. In terms of assembly, part of the 50S ribosomal subunit.

Its function is as follows. This protein is one of the early assembly proteins of the 50S ribosomal subunit, although it is not seen to bind rRNA by itself. It is important during the early stages of 50S assembly. The polypeptide is Large ribosomal subunit protein uL13 (Bacillus pumilus (strain SAFR-032)).